The chain runs to 444 residues: Glutamyl-tRNA reductase (444 aa).

Substrate contacts are provided by residues T49–R52, S117, E122–Q124, and Q128. Catalysis depends on C50, which acts as the Nucleophile. G202–I207 serves as a coordination point for NADP(+).

This sequence belongs to the glutamyl-tRNA reductase family. Homodimer.

The catalysed reaction is (S)-4-amino-5-oxopentanoate + tRNA(Glu) + NADP(+) = L-glutamyl-tRNA(Glu) + NADPH + H(+). The protein operates within porphyrin-containing compound metabolism; protoporphyrin-IX biosynthesis; 5-aminolevulinate from L-glutamyl-tRNA(Glu): step 1/2. Catalyzes the NADPH-dependent reduction of glutamyl-tRNA(Glu) to glutamate 1-semialdehyde (GSA). The sequence is that of Glutamyl-tRNA reductase from Mannheimia succiniciproducens (strain KCTC 0769BP / MBEL55E).